A 474-amino-acid polypeptide reads, in one-letter code: ATP synthase subunit beta (474 aa).

ATP is bound at residue 153 to 160; the sequence is GGAGVGKT.

The protein belongs to the ATPase alpha/beta chains family. In terms of assembly, F-type ATPases have 2 components, CF(1) - the catalytic core - and CF(0) - the membrane proton channel. CF(1) has five subunits: alpha(3), beta(3), gamma(1), delta(1), epsilon(1). CF(0) has three main subunits: a(1), b(2) and c(9-12). The alpha and beta chains form an alternating ring which encloses part of the gamma chain. CF(1) is attached to CF(0) by a central stalk formed by the gamma and epsilon chains, while a peripheral stalk is formed by the delta and b chains.

Its subcellular location is the cell inner membrane. The enzyme catalyses ATP + H2O + 4 H(+)(in) = ADP + phosphate + 5 H(+)(out). Produces ATP from ADP in the presence of a proton gradient across the membrane. The catalytic sites are hosted primarily by the beta subunits. This chain is ATP synthase subunit beta, found in Neorickettsia sennetsu (strain ATCC VR-367 / Miyayama) (Ehrlichia sennetsu).